The following is a 634-amino-acid chain: Probable potassium transport system protein Kup 2 (634 aa).

Transmembrane regions (helical) follow at residues 15 to 35 (LTLGAIGVVYGDIGTSPLYAF), 55 to 75 (VLSLALWALIIVVTLKYVIFL), 101 to 121 (WVAVTLLGATGAALFYGDAII), 142 to 162 (GMSQTAIIGVTVGILAALFMF), 173 to 193 (LFGPVCLVWFVALAGLGLWHI), 208 to 228 (AVTFLVSHGVTGLFVLGAVFL), 252 to 272 (WLSFVWPALTLNYLGQGALAL), 303 to 323 (LVILATLATIIASQAVITGAY), 351 to 371 (IYMPGVNWLLLGGVLLLVLGF), 381 to 401 (YGIAVTGTMVVTTCMAFLIAW), 408 to 428 (PVWTALLIAPFLALDLFFFGA), and 435 to 455 (EGGWVPLLVAGLVGLVIFTWL).

The protein belongs to the HAK/KUP transporter (TC 2.A.72) family.

The protein localises to the cell inner membrane. It carries out the reaction K(+)(in) + H(+)(in) = K(+)(out) + H(+)(out). Its function is as follows. Transport of potassium into the cell. Likely operates as a K(+):H(+) symporter. This is Probable potassium transport system protein Kup 2 from Novosphingobium aromaticivorans (strain ATCC 700278 / DSM 12444 / CCUG 56034 / CIP 105152 / NBRC 16084 / F199).